A 124-amino-acid chain; its full sequence is Small ribosomal subunit protein uS12 (124 aa).

Residue Asp-89 is modified to 3-methylthioaspartic acid.

The protein belongs to the universal ribosomal protein uS12 family. Part of the 30S ribosomal subunit. Contacts proteins S8 and S17. May interact with IF1 in the 30S initiation complex.

In terms of biological role, with S4 and S5 plays an important role in translational accuracy. Its function is as follows. Interacts with and stabilizes bases of the 16S rRNA that are involved in tRNA selection in the A site and with the mRNA backbone. Located at the interface of the 30S and 50S subunits, it traverses the body of the 30S subunit contacting proteins on the other side and probably holding the rRNA structure together. The combined cluster of proteins S8, S12 and S17 appears to hold together the shoulder and platform of the 30S subunit. In Shewanella piezotolerans (strain WP3 / JCM 13877), this protein is Small ribosomal subunit protein uS12.